A 230-amino-acid polypeptide reads, in one-letter code: Ribonuclease 3 (230 aa).

In terms of domain architecture, RNase III spans 5 to 125; the sequence is YSRFYNILGY…VIGAIYLDSD (121 aa). Position 40 (glutamate 40) interacts with Mg(2+). Residue aspartate 44 is part of the active site. Mg(2+)-binding residues include aspartate 111 and glutamate 114. Glutamate 114 is a catalytic residue. Residues 153 to 223 enclose the DRBM domain; it reads DSKSKLQEIL…AEKMIEMLSQ (71 aa).

This sequence belongs to the ribonuclease III family. Homodimer. Mg(2+) serves as cofactor.

It is found in the cytoplasm. It catalyses the reaction Endonucleolytic cleavage to 5'-phosphomonoester.. Its function is as follows. Digests double-stranded RNA. Involved in the processing of primary rRNA transcript to yield the immediate precursors to the large and small rRNAs (23S and 16S). Processes some mRNAs, and tRNAs when they are encoded in the rRNA operon. Processes pre-crRNA and tracrRNA of type II CRISPR loci if present in the organism. This Francisella tularensis subsp. tularensis (strain FSC 198) protein is Ribonuclease 3.